The primary structure comprises 224 residues: Extracellular protease inhibitor 10 (224 aa).

An N-terminal signal peptide occupies residues 1-22; it reads MKSAFTLSLALVAVTATISAAA. Kazal-like domains are found at residues 23–72, 90–127, and 156–210; these read DDNC…ECAS, TSGTVGCPDMCLDVYDPVSDENGKEYSNQCYMEMAKCK, and GYQG…PCPS. Asn25 carries N-linked (GlcNAc...) asparagine glycosylation. Disulfide bonds link Cys26–Cys56, Cys30–Cys49, and Cys38–Cys70. The interval 69 to 92 is disordered; the sequence is ECASTPASSATPSPVTSSTGSTSG. Residues 71 to 92 show a composition bias toward low complexity; sequence ASTPASSATPSPVTSSTGSTSG. 5 cysteine pairs are disulfide-bonded: Cys96-Cys126, Cys100-Cys119, Cys162-Cys193, Cys167-Cys186, and Cys175-Cys208. N-linked (GlcNAc...) asparagine glycosylation is present at Asn199. The disordered stretch occupies residues 202–224; sequence MVGEGPCPSQEQQQQQQQQQQKL. The span at 211–224 shows a compositional bias: low complexity; the sequence is QEQQQQQQQQQQKL.

As to quaternary structure, interacts with host subtilisin-like protease P69B.

It localises to the secreted. In terms of biological role, secreted effector that interacts with and inhibits the pathogenesis-related P69B subtilisin-like serine protease of host tomato. Inhibition of host proteases by a pathogen extracellular protease inhibitor forms a specific type of defense-counterdefense mechanism between plants and microbial pathogens. The sequence is that of Extracellular protease inhibitor 10 from Phytophthora infestans (Potato late blight agent).